A 105-amino-acid chain; its full sequence is Malonate decarboxylase acyl carrier protein (105 aa).

The residue at position 28 (serine 28) is an O-(phosphoribosyl dephospho-coenzyme A)serine.

Belongs to the MdcC family. Post-translationally, covalently binds the prosthetic group of malonate decarboxylase.

The protein resides in the cytoplasm. Functionally, subunit of malonate decarboxylase, it is an acyl carrier protein to which acetyl and malonyl thioester residues are bound via a 2'-(5''-phosphoribosyl)-3'-dephospho-CoA prosthetic group and turn over during the catalytic mechanism. This Bradyrhizobium diazoefficiens (strain JCM 10833 / BCRC 13528 / IAM 13628 / NBRC 14792 / USDA 110) protein is Malonate decarboxylase acyl carrier protein.